Consider the following 221-residue polypeptide: Translation initiation factor 6 (221 aa).

This sequence belongs to the eIF-6 family.

Its function is as follows. Binds to the 50S ribosomal subunit and prevents its association with the 30S ribosomal subunit to form the 70S initiation complex. This is Translation initiation factor 6 from Natronomonas pharaonis (strain ATCC 35678 / DSM 2160 / CIP 103997 / JCM 8858 / NBRC 14720 / NCIMB 2260 / Gabara) (Halobacterium pharaonis).